The primary structure comprises 71 residues: VLIIAVLFLTASELVTADYTRDKWQYRAASLRDAMRNFRDTRCSPGGEVCTRHSPCCTGFLCNHIGGMCHH.

Residues 1-17 (VLIIAVLFLTASELVTA) form the signal peptide. Positions 18–41 (DYTRDKWQYRAASLRDAMRNFRDT) are excised as a propeptide. Cystine bridges form between Cys-43/Cys-57, Cys-50/Cys-62, and Cys-56/Cys-69.

This sequence belongs to the conotoxin O1 superfamily. In terms of tissue distribution, expressed by the venom duct.

The protein resides in the secreted. The polypeptide is Conotoxin LvVIB (Conus lividus (Livid cone)).